A 190-amino-acid polypeptide reads, in one-letter code: MASRGKTETSKLKQNLEEQLDRLMQQLQDLEECREELDGDEYEETKKETLEQLSEFNDSLKKIMSGNMTLVDELSGMQLAIQAAISQAFKTPEVIRLFAKKQPGQLRTRLAEMDRDLMVGKLERDLHTQQKVEILTALRKLGEKLTDDDEAFLSANAGAVLSQFEKVSTELGSGDKVLALAGFEVEKAKK.

Residues 2–63 (ASRGKTETSK…SEFNDSLKKI (62 aa)) adopt a coiled-coil conformation.

This sequence belongs to the CTNNBIP1 family. Does not interact with CTNNB1.

The protein is Protein LZIC (Lzic) of Rattus norvegicus (Rat).